The following is a 402-amino-acid chain: S-adenosylmethionine synthase (402 aa).

Residue H15 participates in ATP binding. D17 serves as a coordination point for Mg(2+). Residue E43 coordinates K(+). Residues E56 and Q99 each contribute to the L-methionine site. The flexible loop stretch occupies residues 99 to 109; that stretch reads QSPDIAQGVDT. ATP-binding positions include 174–176, 247–248, D256, 262–263, A279, and K283; these read DGK, RF, and RK. Position 256 (D256) interacts with L-methionine. L-methionine is bound at residue K287.

This sequence belongs to the AdoMet synthase family. In terms of assembly, homotetramer; dimer of dimers. Mg(2+) serves as cofactor. The cofactor is K(+).

The protein localises to the cytoplasm. The enzyme catalyses L-methionine + ATP + H2O = S-adenosyl-L-methionine + phosphate + diphosphate. It functions in the pathway amino-acid biosynthesis; S-adenosyl-L-methionine biosynthesis; S-adenosyl-L-methionine from L-methionine: step 1/1. Functionally, catalyzes the formation of S-adenosylmethionine (AdoMet) from methionine and ATP. The overall synthetic reaction is composed of two sequential steps, AdoMet formation and the subsequent tripolyphosphate hydrolysis which occurs prior to release of AdoMet from the enzyme. This is S-adenosylmethionine synthase from Streptomyces coelicolor (strain ATCC BAA-471 / A3(2) / M145).